The following is a 326-amino-acid chain: Vitamin B12 import system permease protein BtuC (326 aa).

Helical transmembrane passes span 15 to 35, 61 to 81, 88 to 108, 112 to 132, 146 to 166, 184 to 204, 240 to 260, 274 to 294, and 302 to 322; these read WLLC…CAGE, LAVL…QALF, PGLL…VLLG, LPNW…TLIL, LLAG…AIYF, GGVD…LLWI, GWMV…GLVI, VLLP…DIVA, and ELPI…WLLL.

The protein belongs to the binding-protein-dependent transport system permease family. FecCD subfamily. As to quaternary structure, the complex is composed of two ATP-binding proteins (BtuD), two transmembrane proteins (BtuC) and a solute-binding protein (BtuF).

Its subcellular location is the cell inner membrane. Its function is as follows. Part of the ABC transporter complex BtuCDF involved in vitamin B12 import. Involved in the translocation of the substrate across the membrane. The sequence is that of Vitamin B12 import system permease protein BtuC from Escherichia coli O7:K1 (strain IAI39 / ExPEC).